A 249-amino-acid chain; its full sequence is Probable transcriptional regulatory protein OTBS_0251 (249 aa).

It belongs to the TACO1 family.

Its subcellular location is the cytoplasm. The chain is Probable transcriptional regulatory protein OTBS_0251 from Orientia tsutsugamushi (strain Boryong) (Rickettsia tsutsugamushi).